The following is a 125-amino-acid chain: Small ribosomal subunit protein uS12 (125 aa).

Residues 1 to 23 (MATVNQLVRKGRTKRTAKSSVPA) are disordered. D89 is modified (3-methylthioaspartic acid). Positions 102–125 (ADTAGVDKRRQGRSKYGAKRPKKK) are disordered. Over residues 111 to 125 (RQGRSKYGAKRPKKK) the composition is skewed to basic residues.

It belongs to the universal ribosomal protein uS12 family. As to quaternary structure, part of the 30S ribosomal subunit. Contacts proteins S8 and S17. May interact with IF1 in the 30S initiation complex.

Functionally, with S4 and S5 plays an important role in translational accuracy. Its function is as follows. Interacts with and stabilizes bases of the 16S rRNA that are involved in tRNA selection in the A site and with the mRNA backbone. Located at the interface of the 30S and 50S subunits, it traverses the body of the 30S subunit contacting proteins on the other side and probably holding the rRNA structure together. The combined cluster of proteins S8, S12 and S17 appears to hold together the shoulder and platform of the 30S subunit. In Halorhodospira halophila (strain DSM 244 / SL1) (Ectothiorhodospira halophila (strain DSM 244 / SL1)), this protein is Small ribosomal subunit protein uS12.